Here is a 60-residue protein sequence, read N- to C-terminus: uncharacterized protein (60 aa).

The disordered stretch occupies residues 27-50; sequence VKNNNNNNNNNNNNNNNNNNNNNK. Positions 29–49 are enriched in low complexity; it reads NNNNNNNNNNNNNNNNNNNNN.

This is an uncharacterized protein from Dictyostelium discoideum (Social amoeba).